The following is a 337-amino-acid chain: Ferredoxin--NADP reductase (337 aa).

Aspartate 35, glutamine 43, tyrosine 48, valine 88, phenylalanine 123, aspartate 289, and threonine 330 together coordinate FAD.

Belongs to the ferredoxin--NADP reductase type 2 family. Homodimer. FAD serves as cofactor.

The enzyme catalyses 2 reduced [2Fe-2S]-[ferredoxin] + NADP(+) + H(+) = 2 oxidized [2Fe-2S]-[ferredoxin] + NADPH. The protein is Ferredoxin--NADP reductase of Paramagnetospirillum magneticum (strain ATCC 700264 / AMB-1) (Magnetospirillum magneticum).